The sequence spans 202 residues: Neurensin-2 (202 aa).

2 consecutive transmembrane segments (helical) span residues 65 to 85 (VAVA…GYAV) and 116 to 136 (VVGA…LFLI). A disordered region spans residues 162–202 (RDEPEKLSPAFHETSSQSPFLTPPSPFGQQSVQTSQPQRDL). Over residues 188-202 (FGQQSVQTSQPQRDL) the composition is skewed to polar residues.

The protein belongs to the VMP family. As to expression, expressed specifically in brain where it is widely expressed, with highest levels of expression in thalamus and hypothalamus. In brain, found in neural cell bodies and detected in many regions of the limbic system, such as the septum nucleus, horizontal and vertical limbs of the diagonal band, hippocampus, amygdaloid nucleus, and habernula nucleus. Also localizes to small vesicles found in the perinuclear region of Neuro2a and PC12 cells.

The protein localises to the membrane. May play a role in maintenance and/or transport of vesicles. This is Neurensin-2 from Mus musculus (Mouse).